A 287-amino-acid polypeptide reads, in one-letter code: Phosphatidylserine decarboxylase proenzyme (287 aa).

Catalysis depends on charge relay system; for autoendoproteolytic cleavage activity residues aspartate 90, histidine 147, and serine 252. The active-site Schiff-base intermediate with substrate; via pyruvic acid; for decarboxylase activity is serine 252. At serine 252 the chain carries Pyruvic acid (Ser); by autocatalysis.

Belongs to the phosphatidylserine decarboxylase family. PSD-B subfamily. Prokaryotic type I sub-subfamily. As to quaternary structure, heterodimer of a large membrane-associated beta subunit and a small pyruvoyl-containing alpha subunit. It depends on pyruvate as a cofactor. Is synthesized initially as an inactive proenzyme. Formation of the active enzyme involves a self-maturation process in which the active site pyruvoyl group is generated from an internal serine residue via an autocatalytic post-translational modification. Two non-identical subunits are generated from the proenzyme in this reaction, and the pyruvate is formed at the N-terminus of the alpha chain, which is derived from the carboxyl end of the proenzyme. The autoendoproteolytic cleavage occurs by a canonical serine protease mechanism, in which the side chain hydroxyl group of the serine supplies its oxygen atom to form the C-terminus of the beta chain, while the remainder of the serine residue undergoes an oxidative deamination to produce ammonia and the pyruvoyl prosthetic group on the alpha chain. During this reaction, the Ser that is part of the protease active site of the proenzyme becomes the pyruvoyl prosthetic group, which constitutes an essential element of the active site of the mature decarboxylase.

The protein resides in the cell membrane. It carries out the reaction a 1,2-diacyl-sn-glycero-3-phospho-L-serine + H(+) = a 1,2-diacyl-sn-glycero-3-phosphoethanolamine + CO2. It participates in phospholipid metabolism; phosphatidylethanolamine biosynthesis; phosphatidylethanolamine from CDP-diacylglycerol: step 2/2. Its function is as follows. Catalyzes the formation of phosphatidylethanolamine (PtdEtn) from phosphatidylserine (PtdSer). This chain is Phosphatidylserine decarboxylase proenzyme, found in Pseudomonas putida (strain ATCC 47054 / DSM 6125 / CFBP 8728 / NCIMB 11950 / KT2440).